Here is a 208-residue protein sequence, read N- to C-terminus: MLKVLDHPLIKIKLTNMRNRESGHSVFRQNLNEIGSLMVYEILRDYQTKRKEIITSINKKYLGYEFDKDVVFVPILRAGLGMIDGLLKLIPEAKVGHIGMSRDETTFKPTEYFYKIPEVPKDSYIFVVDPMLATGNSAVDAITRLRKDGFNNISLVCLVGVKEGVDNVEKHFGHDINIYLAALDECLNKDKYIEPGLGDAGDRIFGTK.

5-phospho-alpha-D-ribose 1-diphosphate contacts are provided by residues Arg-77, Arg-102, and 129-137 (DPMLATGNS). Residues Ile-193 and 198–200 (GDA) each bind uracil. Asp-199 is a 5-phospho-alpha-D-ribose 1-diphosphate binding site.

It belongs to the UPRTase family. It depends on Mg(2+) as a cofactor.

It catalyses the reaction UMP + diphosphate = 5-phospho-alpha-D-ribose 1-diphosphate + uracil. Its pathway is pyrimidine metabolism; UMP biosynthesis via salvage pathway; UMP from uracil: step 1/1. Allosterically activated by GTP. Catalyzes the conversion of uracil and 5-phospho-alpha-D-ribose 1-diphosphate (PRPP) to UMP and diphosphate. The sequence is that of Uracil phosphoribosyltransferase from Mycoplasmopsis agalactiae (strain NCTC 10123 / CIP 59.7 / PG2) (Mycoplasma agalactiae).